Consider the following 583-residue polypeptide: Probable cysteine--tRNA ligase, mitochondrial (583 aa).

A Zn(2+)-binding site is contributed by Cys82. Residue Gly83 participates in L-cysteine binding. The 'HIGH' region signature appears at 84–94 (PTVYSSSHIGH). Thr123 serves as a coordination point for L-cysteine. A 'KIIK' region motif is present at residues 128 to 131 (KIIN). 3 residues coordinate Zn(2+): Cys271, His296, and Glu300. His296 lines the L-cysteine pocket. A 'KMSKS' region motif is present at residues 337–341 (KMSKS). Lys340 contributes to the ATP binding site.

Belongs to the class-I aminoacyl-tRNA synthetase family. It depends on Zn(2+) as a cofactor.

The protein resides in the mitochondrion. The catalysed reaction is tRNA(Cys) + L-cysteine + ATP = L-cysteinyl-tRNA(Cys) + AMP + diphosphate. In terms of biological role, mitochondrial cysteine-specific aminoacyl-tRNA synthetase that catalyzes the ATP-dependent ligation of cysteine to tRNA(Cys). Its function is as follows. In addition to its role as an aminoacyl-tRNA synthetase, has also cysteine persulfide synthase activity. Produces reactive persulfide species such as cysteine persulfide (CysSSH) from substrate cysteine and mediate direct incorporation of CysSSH into proteins during translations, resulting in protein persulfides and polysulfides. CysSSHs behave as potent antioxidants and cellular protectants. The sequence is that of Probable cysteine--tRNA ligase, mitochondrial (mcysS) from Dictyostelium discoideum (Social amoeba).